We begin with the raw amino-acid sequence, 842 residues long: Envelope glycoprotein gp160 (842 aa).

The first 23 residues, methionine 1–glutamate 23, serve as a signal peptide directing secretion. Residues glutamine 24–isoleucine 663 lie on the Extracellular side of the membrane. Residues cysteine 45 and cysteine 65 are joined by a disulfide bond. N-linked (GlcNAc...) asparagine; by host glycans are attached at residues asparagine 79, asparagine 123, asparagine 131, asparagine 134, asparagine 149, asparagine 153, asparagine 181, asparagine 190, asparagine 225, asparagine 229, asparagine 234, asparagine 255, asparagine 267, asparagine 278, asparagine 284, asparagine 290, asparagine 320, asparagine 331, and asparagine 345. Cystine bridges form between cysteine 110-cysteine 198, cysteine 117-cysteine 189, cysteine 122-cysteine 150, cysteine 211-cysteine 240, and cysteine 221-cysteine 232. The segment at cysteine 122–asparagine 149 is V1. Residues cysteine 150–cysteine 189 form a V2 region. Positions cysteine 285–tyrosine 318 are V3. A disulfide bridge connects residues cysteine 285 and cysteine 319. A CD4-binding loop region spans residues arginine 353–leucine 363. Intrachain disulfides connect cysteine 367-cysteine 423 and cysteine 374-cysteine 396. The V4 stretch occupies residues cysteine 374–cysteine 396. Asparagine 375, asparagine 386, asparagine 422, and asparagine 426 each carry an N-linked (GlcNAc...) asparagine; by host glycan. V5 regions lie at residues aspartate 439–serine 448 and lysine 441–serine 448. Residues alanine 489–alanine 510 form a fusion peptide region. The tract at residues lysine 552–isoleucine 570 is immunosuppression. Cysteine 576 and cysteine 582 are oxidised to a cystine. N-linked (GlcNAc...) asparagine; by host glycans are attached at residues asparagine 589, asparagine 594, asparagine 595, asparagine 604, and asparagine 616. Residues glutamate 612–aspartate 646 are a coiled coil. The MPER; binding to GalCer stretch occupies residues glutamate 641–lysine 662. Residues alanine 664–isoleucine 684 traverse the membrane as a helical segment. Over alanine 685 to isoleucine 842 the chain is Cytoplasmic. Positions tyrosine 691–leucine 694 match the YXXL motif; contains endocytosis signal motif.

Belongs to the HIV-1 env protein family. The mature envelope protein (Env) consists of a homotrimer of non-covalently associated gp120-gp41 heterodimers. The resulting complex protrudes from the virus surface as a spike. There seems to be as few as 10 spikes on the average virion. Interacts with host CD4, CCR5 and CXCR4. Gp120 also interacts with the C-type lectins CD209/DC-SIGN and CLEC4M/DC-SIGNR (collectively referred to as DC-SIGN(R)). Gp120 and gp41 interact with GalCer. Gp120 interacts with host ITGA4/ITGB7 complex; on CD4+ T-cells, this interaction results in rapid activation of integrin ITGAL/LFA-1, which facilitates efficient cell-to-cell spreading of HIV-1. Gp120 interacts with cell-associated heparan sulfate; this interaction increases virus infectivity on permissive cells and may be involved in infection of CD4- cells. In terms of assembly, the mature envelope protein (Env) consists of a homotrimer of non-covalently associated gp120-gp41 heterodimers. The resulting complex protrudes from the virus surface as a spike. There seems to be as few as 10 spikes on the average virion. In terms of processing, highly glycosylated by host. The high number of glycan on the protein is reffered to as 'glycan shield' because it contributes to hide protein sequence from adaptive immune system. Post-translationally, palmitoylation of the transmembrane protein and of Env polyprotein (prior to its proteolytic cleavage) is essential for their association with host cell membrane lipid rafts. Palmitoylation is therefore required for envelope trafficking to classical lipid rafts, but not for viral replication. Specific enzymatic cleavages in vivo yield mature proteins. Envelope glycoproteins are synthesized as an inactive precursor that is heavily N-glycosylated and processed likely by host cell furin in the Golgi to yield the mature SU and TM proteins. The cleavage site between SU and TM requires the minimal sequence [KR]-X-[KR]-R. About 2 of the 9 disulfide bonds of gp41 are reduced by P4HB/PDI, following binding to CD4 receptor.

It localises to the virion membrane. It is found in the host cell membrane. The protein localises to the host endosome membrane. In terms of biological role, oligomerizes in the host endoplasmic reticulum into predominantly trimers. In a second time, gp160 transits in the host Golgi, where glycosylation is completed. The precursor is then proteolytically cleaved in the trans-Golgi and thereby activated by cellular furin or furin-like proteases to produce gp120 and gp41. Its function is as follows. Attaches the virus to the host lymphoid cell by binding to the primary receptor CD4. This interaction induces a structural rearrangement creating a high affinity binding site for a chemokine coreceptor like CXCR4 and/or CCR5. Acts as a ligand for CD209/DC-SIGN and CLEC4M/DC-SIGNR, which are respectively found on dendritic cells (DCs), and on endothelial cells of liver sinusoids and lymph node sinuses. These interactions allow capture of viral particles at mucosal surfaces by these cells and subsequent transmission to permissive cells. HIV subverts the migration properties of dendritic cells to gain access to CD4+ T-cells in lymph nodes. Virus transmission to permissive T-cells occurs either in trans (without DCs infection, through viral capture and transmission), or in cis (following DCs productive infection, through the usual CD4-gp120 interaction), thereby inducing a robust infection. In trans infection, bound virions remain infectious over days and it is proposed that they are not degraded, but protected in non-lysosomal acidic organelles within the DCs close to the cell membrane thus contributing to the viral infectious potential during DCs' migration from the periphery to the lymphoid tissues. On arrival at lymphoid tissues, intact virions recycle back to DCs' cell surface allowing virus transmission to CD4+ T-cells. Acts as a class I viral fusion protein. Under the current model, the protein has at least 3 conformational states: pre-fusion native state, pre-hairpin intermediate state, and post-fusion hairpin state. During fusion of viral and target intracellular membranes, the coiled coil regions (heptad repeats) assume a trimer-of-hairpins structure, positioning the fusion peptide in close proximity to the C-terminal region of the ectodomain. The formation of this structure appears to drive apposition and subsequent fusion of viral and target cell membranes. Complete fusion occurs in host cell endosomes and is dynamin-dependent, however some lipid transfer might occur at the plasma membrane. The virus undergoes clathrin-dependent internalization long before endosomal fusion, thus minimizing the surface exposure of conserved viral epitopes during fusion and reducing the efficacy of inhibitors targeting these epitopes. Membranes fusion leads to delivery of the nucleocapsid into the cytoplasm. This chain is Envelope glycoprotein gp160, found in Human immunodeficiency virus type 1 group N (isolate YBF30) (HIV-1).